The sequence spans 198 residues: PEP-dependent dihydroxyacetone kinase 1, ADP-binding subunit DhaL (198 aa).

A DhaL domain is found at 6 to 194 (DWALRWLNDF…SALLFHAMLQ (189 aa)). Mg(2+)-binding residues include D30, D35, and D37. Residues 38 to 41 (HGIN), 79 to 80 (AS), G120, M129, R166, and 179 to 181 (DPG) contribute to the ADP site.

In terms of assembly, homodimer. The dihydroxyacetone kinase complex is composed of a homodimer of DhaM, a homodimer of DhaK and the subunit DhaL. It depends on Mg(2+) as a cofactor.

The protein resides in the cytoplasm. The enzyme catalyses dihydroxyacetone + phosphoenolpyruvate = dihydroxyacetone phosphate + pyruvate. Its pathway is polyol metabolism; glycerol degradation. ADP-binding subunit of the dihydroxyacetone kinase, which is responsible for the phosphoenolpyruvate (PEP)-dependent phosphorylation of dihydroxyacetone. DhaL-ADP is converted to DhaL-ATP via a phosphoryl group transfer from DhaM and transmits it to dihydroxyacetone binds to DhaK. The sequence is that of PEP-dependent dihydroxyacetone kinase 1, ADP-binding subunit DhaL from Listeria innocua serovar 6a (strain ATCC BAA-680 / CLIP 11262).